The primary structure comprises 226 residues: Beta-casein (226 aa).

Residues 1 to 51 (REKEELNVSSETVESLSSNEPDSSSEESITHINKEKSQKFKHEGQQQREVE) are disordered. Residue serine 9 is modified to Phosphoserine. Threonine 12 carries the phosphothreonine modification. Residues serine 15, serine 17, serine 18, and serine 25 each carry the phosphoserine modification. The span at 28-51 (SITHINKEKSQKFKHEGQQQREVE) shows a compositional bias: basic and acidic residues.

This sequence belongs to the beta-casein family. In terms of processing, there are at least three different forms found in milk, with varying degrees of phosphorylation. These include form 5-P which is phosphorylated at three sites, this form is present in low amounts, form 6-P which is phosphorylated at six sites, and form 7-P which is phosphorylated at seven sites. Mammary gland specific. Secreted in milk.

The protein localises to the secreted. Functionally, important role in determination of the surface properties of the casein micelles. The polypeptide is Beta-casein (Equus asinus (Donkey)).